We begin with the raw amino-acid sequence, 907 residues long: DNA mismatch repair protein MutS (907 aa).

656–663 (GPNMAGKS) contacts ATP.

It belongs to the DNA mismatch repair MutS family.

This protein is involved in the repair of mismatches in DNA. It is possible that it carries out the mismatch recognition step. This protein has a weak ATPase activity. The chain is DNA mismatch repair protein MutS from Nitrobacter hamburgensis (strain DSM 10229 / NCIMB 13809 / X14).